The following is a 1489-amino-acid chain: Sex-determining transformer protein 2 (1489 aa).

The signal sequence occupies residues 1-33; that stretch reads MKLAFNKLLVASVVFTVLSFGLLLASLFTTTAT. 11 consecutive transmembrane segments (helical) span residues 454–474, 489–509, 513–533, 600–620, 622–642, 749–769, 931–951, 958–978, 986–1006, 1041–1061, and 1066–1086; these read MIYFILGACALMVALFAAFAF, GFITGLLFIFLCKSGGLILID, LCYITMHLAFNLVMTARVTFI, YWFLIAIVLVPVIGVYWFFID, DVQKICIVLLPAFLIAAFEEM, AVVVSSVAALLILLSIGLLFI, IFAAAVLAGFFSIIVVFFSIG, LAFAFFVVGNRLEIAAIVSLF, YTNVAVFVGFLAAWTPFCDLA, VQIFAIFLTATILLIVITAII, and AFFIPTVILLITLLLAVFNSL. Residues 1138-1288 form an interaction with fem-3 region; the sequence is EFSIRPTENT…EQQEVTDDVA (151 aa). 3 disordered regions span residues 1143–1176, 1233–1393, and 1412–1489; these read PTENTKHYAPRPIDNSDPPEQAADEEVVNQDPSM, LLRQ…YPPS, and RNLP…TPGL. Basic and acidic residues-rich tracts occupy residues 1275–1298, 1326–1340, and 1423–1433; these read DPAKEQQEVTDDVATRYKEEEVRK, VSREAPEDSPNREPR, and RPRDWDQRRLV. An MX regulatory domain; required for tra-1 binding region spans residues 1402-1423; sequence CEDVYWKYNERNLPDNVPMPPR. A compositionally biased stretch (pro residues) spans 1444-1456; the sequence is VPPPGRSAIPIPP. Residues 1460–1482 are compositionally biased toward basic and acidic residues; sequence RLRERRREQHLREQEARRNRPES.

As to quaternary structure, interacts with tra-1 and fem-3.

It localises to the membrane. In terms of biological role, plays a major role in controlling sexual cell fates. Promotes female development in XX animals where it sequesters one or more of the FEM proteins to the membrane thereby freeing the tra-1 protein (a putative transcription factor) to enter the nucleus and promote female development. In XO animals it acts as a receptor for her-1 which prevents it from binding to FEM proteins thereby repressing the activity of tra-1. Negatively regulates male development when bound to fem-3 and is required together with tra-1 for promoting spermatogenesis. Also required for feminizing tra-3 activity. This is Sex-determining transformer protein 2 from Caenorhabditis briggsae.